We begin with the raw amino-acid sequence, 85 residues long: MKKILFSMFYSILVGEEPDSVFLKKEGKQNQVKMIWIAPSSCAKDLTISEGTGATFPFHFHSRVSICFHALFLRPRNMKWTNSFS.

This sequence belongs to the ycf76 family.

Its subcellular location is the plastid. It localises to the chloroplast. This is an uncharacterized protein from Zea mays (Maize).